The chain runs to 34 residues: Cytochrome c oxidase polypeptide 2A (34 aa).

Methionine 1 is modified (N-formylmethionine). A helical membrane pass occupies residues 4–34; that stretch reads KPKGALAVILVLTLTILVFWLGVYAVFFARG.

The protein localises to the cell membrane. The catalysed reaction is 4 Fe(II)-[cytochrome c] + O2 + 8 H(+)(in) = 4 Fe(III)-[cytochrome c] + 2 H2O + 4 H(+)(out). The polypeptide is Cytochrome c oxidase polypeptide 2A (cbaD) (Thermus thermophilus (strain ATCC 27634 / DSM 579 / HB8)).